We begin with the raw amino-acid sequence, 251 residues long: 5-oxoprolinase subunit A (251 aa).

Belongs to the LamB/PxpA family. In terms of assembly, forms a complex composed of PxpA, PxpB and PxpC.

The enzyme catalyses 5-oxo-L-proline + ATP + 2 H2O = L-glutamate + ADP + phosphate + H(+). Functionally, catalyzes the cleavage of 5-oxoproline to form L-glutamate coupled to the hydrolysis of ATP to ADP and inorganic phosphate. The chain is 5-oxoprolinase subunit A from Tolumonas auensis (strain DSM 9187 / NBRC 110442 / TA 4).